The sequence spans 228 residues: 2,3-bisphosphoglycerate-dependent phosphoglycerate mutase (228 aa).

Substrate contacts are provided by residues 8–15 (RHGQSVWN), 21–22 (TG), R60, 87–90 (ERHY), K98, 114–115 (RR), and 183–184 (GN). H9 functions as the Tele-phosphohistidine intermediate in the catalytic mechanism. E87 serves as the catalytic Proton donor/acceptor.

The protein belongs to the phosphoglycerate mutase family. BPG-dependent PGAM subfamily.

The catalysed reaction is (2R)-2-phosphoglycerate = (2R)-3-phosphoglycerate. The protein operates within carbohydrate degradation; glycolysis; pyruvate from D-glyceraldehyde 3-phosphate: step 3/5. Catalyzes the interconversion of 2-phosphoglycerate and 3-phosphoglycerate. In Staphylococcus saprophyticus subsp. saprophyticus (strain ATCC 15305 / DSM 20229 / NCIMB 8711 / NCTC 7292 / S-41), this protein is 2,3-bisphosphoglycerate-dependent phosphoglycerate mutase.